Consider the following 500-residue polypeptide: Glutamate decarboxylase (500 aa).

Residue Lys277 is modified to N6-(pyridoxal phosphate)lysine. The segment at 469-500 is calmodulin-binding; that stretch reads VHKKTDSEVQLEMITAWKKFVEEKKKKTNRVC.

This sequence belongs to the group II decarboxylase family. As to quaternary structure, homodimer. It depends on pyridoxal 5'-phosphate as a cofactor.

The catalysed reaction is L-glutamate + H(+) = 4-aminobutanoate + CO2. Catalyzes the production of GABA. The calmodulin-binding is calcium-dependent and it is proposed that this may, directly or indirectly, form a calcium regulated control of GABA biosynthesis. The chain is Glutamate decarboxylase (GAD) from Petunia hybrida (Petunia).